A 370-amino-acid polypeptide reads, in one-letter code: Cytochrome b (370 aa).

A run of 4 helical transmembrane segments spans residues 25-45, 69-90, 105-125, and 170-190; these read FGSM…FLAV, WMMQ…YIHI, WLSG…GYVL, and FFAL…LHIL. 2 residues coordinate heme b: histidine 75 and histidine 89. Heme b is bound by residues histidine 174 and histidine 188. Histidine 193 is a binding site for a ubiquinone. 4 consecutive transmembrane segments (helical) span residues 218–238, 280–300, 312–332, and 339–358; these read YKDM…VSFF, LGGA…PFTH, FMQL…WTAT, and FTTI…ISNP.

It belongs to the cytochrome b family. The cytochrome bc1 complex contains 3 respiratory subunits (MT-CYB, CYC1 and UQCRFS1), 2 core proteins (UQCRC1 and UQCRC2) and probably 6 low-molecular weight proteins. The cofactor is heme b.

It localises to the mitochondrion inner membrane. In terms of biological role, component of the ubiquinol-cytochrome c reductase complex (complex III or cytochrome b-c1 complex) that is part of the mitochondrial respiratory chain. The b-c1 complex mediates electron transfer from ubiquinol to cytochrome c. Contributes to the generation of a proton gradient across the mitochondrial membrane that is then used for ATP synthesis. This Chilabothrus strigilatus fosteri (Bimini Island boa constrictor) protein is Cytochrome b (MT-CYB).